Consider the following 322-residue polypeptide: uncharacterized protein (322 aa).

The disordered stretch occupies residues Leu-277–Asp-322. Residues Ser-287 to Glu-305 are compositionally biased toward acidic residues.

This is an uncharacterized protein from Frog virus 3 (isolate Goorha) (FV-3).